The chain runs to 272 residues: 2-dehydro-3-deoxyphosphooctonate aldolase (272 aa).

It belongs to the KdsA family.

It localises to the cytoplasm. It carries out the reaction D-arabinose 5-phosphate + phosphoenolpyruvate + H2O = 3-deoxy-alpha-D-manno-2-octulosonate-8-phosphate + phosphate. It functions in the pathway carbohydrate biosynthesis; 3-deoxy-D-manno-octulosonate biosynthesis; 3-deoxy-D-manno-octulosonate from D-ribulose 5-phosphate: step 2/3. The protein operates within bacterial outer membrane biogenesis; lipopolysaccharide biosynthesis. The sequence is that of 2-dehydro-3-deoxyphosphooctonate aldolase from Geobacter sulfurreducens (strain ATCC 51573 / DSM 12127 / PCA).